Here is a 472-residue protein sequence, read N- to C-terminus: 3-isopropylmalate dehydratase large subunit (472 aa).

Residues Cys-347, Cys-407, and Cys-410 each coordinate [4Fe-4S] cluster.

The protein belongs to the aconitase/IPM isomerase family. LeuC type 1 subfamily. Heterodimer of LeuC and LeuD. It depends on [4Fe-4S] cluster as a cofactor.

It carries out the reaction (2R,3S)-3-isopropylmalate = (2S)-2-isopropylmalate. The protein operates within amino-acid biosynthesis; L-leucine biosynthesis; L-leucine from 3-methyl-2-oxobutanoate: step 2/4. Its function is as follows. Catalyzes the isomerization between 2-isopropylmalate and 3-isopropylmalate, via the formation of 2-isopropylmaleate. In Bacillus subtilis (strain 168), this protein is 3-isopropylmalate dehydratase large subunit.